A 210-amino-acid polypeptide reads, in one-letter code: N-(5'-phosphoribosyl)anthranilate isomerase (210 aa).

It belongs to the TrpF family.

It carries out the reaction N-(5-phospho-beta-D-ribosyl)anthranilate = 1-(2-carboxyphenylamino)-1-deoxy-D-ribulose 5-phosphate. It functions in the pathway amino-acid biosynthesis; L-tryptophan biosynthesis; L-tryptophan from chorismate: step 3/5. This Nostoc punctiforme (strain ATCC 29133 / PCC 73102) protein is N-(5'-phosphoribosyl)anthranilate isomerase.